Consider the following 616-residue polypeptide: Dihydroxy-acid dehydratase (616 aa).

Residue Asp81 participates in Mg(2+) binding. Position 122 (Cys122) interacts with [2Fe-2S] cluster. Mg(2+)-binding residues include Asp123 and Lys124. Lys124 is subject to N6-carboxylysine. Residue Cys195 coordinates [2Fe-2S] cluster. Glu491 lines the Mg(2+) pocket. Catalysis depends on Ser517, which acts as the Proton acceptor.

Belongs to the IlvD/Edd family. Homodimer. Requires [2Fe-2S] cluster as cofactor. It depends on Mg(2+) as a cofactor.

It carries out the reaction (2R)-2,3-dihydroxy-3-methylbutanoate = 3-methyl-2-oxobutanoate + H2O. The enzyme catalyses (2R,3R)-2,3-dihydroxy-3-methylpentanoate = (S)-3-methyl-2-oxopentanoate + H2O. It functions in the pathway amino-acid biosynthesis; L-isoleucine biosynthesis; L-isoleucine from 2-oxobutanoate: step 3/4. It participates in amino-acid biosynthesis; L-valine biosynthesis; L-valine from pyruvate: step 3/4. Its function is as follows. Functions in the biosynthesis of branched-chain amino acids. Catalyzes the dehydration of (2R,3R)-2,3-dihydroxy-3-methylpentanoate (2,3-dihydroxy-3-methylvalerate) into 2-oxo-3-methylpentanoate (2-oxo-3-methylvalerate) and of (2R)-2,3-dihydroxy-3-methylbutanoate (2,3-dihydroxyisovalerate) into 2-oxo-3-methylbutanoate (2-oxoisovalerate), the penultimate precursor to L-isoleucine and L-valine, respectively. The polypeptide is Dihydroxy-acid dehydratase (Salmonella newport (strain SL254)).